A 436-amino-acid polypeptide reads, in one-letter code: UPF0229 protein Meso_0256 (436 aa).

A disordered region spans residues 53–110 (PMPARGTSEPTFRPDRSSGERGYILPGNKEFAPGDRLPKPGASGGEGGTGAGRGGSDD). Positions 94-106 (ASGGEGGTGAGRG) are enriched in gly residues.

Belongs to the UPF0229 family.

The sequence is that of UPF0229 protein Meso_0256 from Chelativorans sp. (strain BNC1).